The chain runs to 373 residues: Transcription factor NF-E2 45 kDa subunit (373 aa).

Disordered stretches follow at residues 1 to 22 (MPPCPPQPNRNRLPQLPTGELG) and 40 to 60 (LNVPSEPSFEPQAPTPYPGPL). Positions 1–83 (MPPCPPQPNR…AGFTLPPPPY (83 aa)) are required for interaction with MAPK8. The transactivation domain stretch occupies residues 1–206 (MPPCPPQPNR…PPTETPLVLE (206 aa)). 2 consecutive short sequence motifs (PXY motif) follow at residues 61-65 (PPPTY) and 79-83 (PPPPY). A disordered region spans residues 131–163 (LPVGQPKPQEDPESDSGLSLNYSDAESLELEGT). At S157 the chain carries Phosphoserine; by MAPK8. The residue at position 170 (S170) is a Phosphoserine; by PKA. The disordered stretch occupies residues 206–225 (ESSSGPVRAKPAVRGEAGSR). Positions 266 to 329 (LVRDIRRRGK…EVMRQQLTEL (64 aa)) constitute a bZIP domain. The tract at residues 268–287 (RDIRRRGKNKVAAQNCRKRK) is basic motif. The leucine-zipper stretch occupies residues 291-298 (IVQLEREL). Residue K368 forms a Glycyl lysine isopeptide (Lys-Gly) (interchain with G-Cter in SUMO); alternate linkage. K368 is covalently cross-linked (Glycyl lysine isopeptide (Lys-Gly) (interchain with G-Cter in SUMO1); alternate).

The protein belongs to the bZIP family. CNC subfamily. As to quaternary structure, homodimer; can bind DNA as a homodimer. Erythroid transcription activator nuclear factor erythroid-derived 2 (NF-E2), composed of a heterodimer of NFE2 and MAFK, possesses transactivation activity on beta-globin. Also forms high affinity heterodimer with MAFG; the interaction promotes erythropoiesis. Interacts (via the PXY motif 1) with ITCH (via the WW 1 domain); the interaction promotes 'Lys63'-linked ubiquitination of NFE2, translocates it to the cytoplasm and inhibits its transactivation activity. Interacts with KMT2D/MLL2; the interaction promotes transactivation of the beta-globin locus. Interacts with MAPK8 (phosphorylated form); the interaction leads to phosphorylation of NFE2 in undifferentiated cells. Post-translationally, phosphorylated on serine residues. In undifferentiated erythrocytes, phosphorylated by MAPK8 which then leads to ubiquitination and protein degradation. Sumoylated. Sumoylation is required for translocation to nuclear bodies PODs, anchoring to the gene loci, and transactivation of the beta-globin gene. In terms of processing, ubiquitinated mainly by 'Lys63'-linked ubiquitin. Polyubiquitination with 'Lys63'-linked ubiquitin by ITCH retains NFE2 in the cytoplasm preventing its transactivation activity. In undifferentiated erythrocyte, ubiquitinated after MAPK8-mediatd phosphorylation leading to protein degradation.

The protein localises to the nucleus. The protein resides in the PML body. It localises to the cytoplasm. Its function is as follows. Component of the NF-E2 complex essential for regulating erythroid and megakaryocytic maturation and differentiation. Binds to the hypersensitive site 2 (HS2) of the beta-globin control region (LCR). This subunit (NFE2) recognizes the TCAT/C sequence of the AP-1-like core palindrome present in a number of erythroid and megakaryocytic gene promoters. Requires MAFK or other small MAF proteins for binding to the NF-E2 motif. May play a role in all aspects of hemoglobin production from globin and heme synthesis to procurement of iron. The sequence is that of Transcription factor NF-E2 45 kDa subunit (Nfe2) from Rattus norvegicus (Rat).